Here is a 479-residue protein sequence, read N- to C-terminus: Probable aspartic-type endopeptidase OPSB (479 aa).

Positions 1 to 19 (MRGDSFIWSLTTAASLLYA) are cleaved as a signal peptide. One can recognise a Peptidase A1 domain in the interval 58–393 (SGKTVSQDLD…DLDNNEISIA (336 aa)). Asn-68 is a glycosylation site (N-linked (GlcNAc...) asparagine). Asp-76 is an active-site residue. Asn-121 carries N-linked (GlcNAc...) asparagine glycosylation. Asp-275 is a catalytic residue. Asn-398 is a glycosylation site (N-linked (GlcNAc...) asparagine). The segment at 435-454 (LSGIETGVPGARPTSRGAAP) is disordered. Gly-451 is lipidated: GPI-anchor amidated glycine. Positions 452 to 479 (AAPTMRPDVTFGVAAAGLAGAGILFAFM) are cleaved as a propeptide — removed in mature form.

This sequence belongs to the peptidase A1 family.

The protein resides in the cell membrane. Its function is as follows. Probable GPI-anchored aspartic-type endopeptidase which contributes to virulence. In Arthroderma otae (strain ATCC MYA-4605 / CBS 113480) (Microsporum canis), this protein is Probable aspartic-type endopeptidase OPSB (OPSB).